The sequence spans 448 residues: Phosphohexose mutases (448 aa).

S97 functions as the Phosphoserine intermediate in the catalytic mechanism. The Mg(2+) site is built by S97, D237, D239, and D241.

It belongs to the phosphohexose mutase family. Requires Mg(2+) as cofactor.

It catalyses the reaction alpha-D-glucose 1-phosphate = alpha-D-glucose 6-phosphate. It carries out the reaction alpha-D-mannose 1-phosphate = D-mannose 6-phosphate. It functions in the pathway nucleotide-sugar biosynthesis; GDP-alpha-D-mannose biosynthesis; alpha-D-mannose 1-phosphate from D-fructose 6-phosphate: step 2/2. Functionally, involved in xanthan production. This Xanthomonas campestris pv. campestris (strain ATCC 33913 / DSM 3586 / NCPPB 528 / LMG 568 / P 25) protein is Phosphohexose mutases (xanA).